Consider the following 223-residue polypeptide: Ribonuclease DdI (223 aa).

The N-terminal stretch at 1–25 (MRLIAALLSVLLIASTAQSTVTIYE) is a signal peptide. A disulfide bridge connects residues cysteine 46 and cysteine 51. Catalysis depends on residues histidine 63, glutamate 113, and histidine 117. Cysteine 78 and cysteine 120 are oxidised to a cystine. Residue asparagine 144 is glycosylated (N-linked (GlcNAc...) asparagine). 2 disulfides stabilise this stretch: cysteine 183–cysteine 213 and cysteine 194–cysteine 205.

The protein belongs to the RNase T2 family.

It localises to the lysosome. The catalysed reaction is a ribonucleotidyl-ribonucleotide-RNA + H2O = a 3'-end 3'-phospho-ribonucleotide-RNA + a 5'-end dephospho-ribonucleoside-RNA + H(+). With respect to regulation, inhibited by Cu(2+) and Zn(2+). Releases mononucleotides from RNA in the order of 3'-GMP &gt; 3'-UMP &gt; 3'-AMP &gt; 3'-CMP. This is Ribonuclease DdI (ddiA) from Dictyostelium discoideum (Social amoeba).